Here is a 118-residue protein sequence, read N- to C-terminus: UPF0382 membrane protein C1782.12c (118 aa).

Positions 1 to 18 (MTIWNVAALTGLLSVGLG) are cleaved as a signal peptide. Over 19-40 (AYGSHGLQKRVQDPHLLKSWST) the chain is Lumenal. A helical transmembrane segment spans residues 41–61 (ACTYLMFHSLATMAVSLHPVY). Topologically, residues 62-67 (GKSRWT) are cytoplasmic. Residues 68–88 (GPLLITGSCLFSGTIYGLCLL) form a helical membrane-spanning segment. The Lumenal portion of the chain corresponds to 89 to 96 (PKGHSLRR). The chain crosses the membrane as a helical span at residues 97–117 (ILGPLTPIGGLVMLTGWATML). Residue Val118 is a topological domain, cytoplasmic.

It belongs to the UPF0382 family.

The protein localises to the endoplasmic reticulum membrane. The sequence is that of UPF0382 membrane protein C1782.12c from Schizosaccharomyces pombe (strain 972 / ATCC 24843) (Fission yeast).